Reading from the N-terminus, the 1934-residue chain is Tudor domain-containing protein 15 (1934 aa).

Tudor domains are found at residues 59–117 (NVEI…LFEL), 289–347 (CDNF…FILV), 531–589 (KPEP…FCEL), 799–856 (PYEI…FLLL), 1011–1070 (DSNK…FPEL), and 1342–1401 (KPLV…FLTV). Residues 1490 to 1510 (VRPGDNEMKKGKSNESEGSMN) are disordered. The segment covering 1491 to 1504 (RPGDNEMKKGKSNE) has biased composition (basic and acidic residues). 2 Tudor domains span residues 1574–1633 (SIEK…IRNI) and 1780–1838 (FIIP…PEEL).

This chain is Tudor domain-containing protein 15 (TDRD15), found in Homo sapiens (Human).